Reading from the N-terminus, the 492-residue chain is Osmoregulated proline transporter OpuE (492 aa).

13 helical membrane passes run 3–23, 40–60, 62–82, 125–145, 161–181, 190–210, 224–244, 271–291, 314–334, 365–385, 394–414, 424–444, and 449–469; these read IEII…GWYA, LGPF…WMLM, VPGA…GLTI, IVSA…GMVS, GLFL…FLAV, AIMF…VGGV, LLDI…AWGL, IGMS…LIGV, ILFH…AIMS, LVMI…LLSL, LVGY…LLSL, ALAA…TGLA, and VYEI…VSMI.

The protein belongs to the sodium:solute symporter (SSF) (TC 2.A.21) family.

Its subcellular location is the cell membrane. The enzyme catalyses L-proline(in) + Na(+)(in) = L-proline(out) + Na(+)(out). Its function is as follows. Catalyzes the uptake of extracellular proline under high-osmolarity growth conditions. Essential for the use of proline present in the environment as an osmoprotectant. In Bacillus subtilis (strain 168), this protein is Osmoregulated proline transporter OpuE.